The primary structure comprises 763 residues: ATP-dependent RNA helicase MAK5 (763 aa).

2 disordered regions span residues 1 to 35 (MVNK…SNNN) and 87 to 169 (DTKI…DNEV). Over residues 18–35 (FKGSSSKGNSKTVKSNNN) the composition is skewed to low complexity. Acidic residues predominate over residues 104–114 (EIDEDAPENDL). The segment covering 115–127 (VEFKNMDDMKDGE) has biased composition (basic and acidic residues). The span at 136-160 (SEAEAESEAESEEEEEKTGDDEGED) shows a compositional bias: acidic residues. Residues 192-220 (WTEKVGELSFTTLHGLTKLGFNKPTLIQE) carry the Q motif motif. The region spanning 223-411 (IPMALKGEDI…SHASWKNMKT (189 aa)) is the Helicase ATP-binding domain. 236 to 243 (ASTGSGKT) is a binding site for ATP. The DEAD box motif lies at 352 to 355 (DEAD). The Helicase C-terminal domain maps to 450–619 (QIKESLIECA…DIIMGKKKWQ (170 aa)).

The protein belongs to the DEAD box helicase family. DDX24/MAK5 subfamily.

The protein resides in the nucleus. It localises to the nucleolus. The catalysed reaction is ATP + H2O = ADP + phosphate + H(+). Functionally, ATP-binding RNA helicase involved in the biogenesis of 60S ribosomal subunits and is required for the normal formation of 25S and 5.8S rRNAs. This is ATP-dependent RNA helicase MAK5 (MAK5) from Vanderwaltozyma polyspora (strain ATCC 22028 / DSM 70294 / BCRC 21397 / CBS 2163 / NBRC 10782 / NRRL Y-8283 / UCD 57-17) (Kluyveromyces polysporus).